Here is a 207-residue protein sequence, read N- to C-terminus: Probable GTP-binding protein EngB (207 aa).

Residues 25–202 (DVPEIAFVGR…ATLLWQWAHP (178 aa)) form the EngB-type G domain. GTP-binding positions include 33–40 (GRSNAGKS), 60–64 (GRTQH), 82–85 (DLPG), 152–155 (TKAD), and 181–183 (FSA). Residues S40 and T62 each coordinate Mg(2+).

This sequence belongs to the TRAFAC class TrmE-Era-EngA-EngB-Septin-like GTPase superfamily. EngB GTPase family. Requires Mg(2+) as cofactor.

Its function is as follows. Necessary for normal cell division and for the maintenance of normal septation. This is Probable GTP-binding protein EngB from Albidiferax ferrireducens (strain ATCC BAA-621 / DSM 15236 / T118) (Rhodoferax ferrireducens).